Reading from the N-terminus, the 115-residue chain is Parathyroid hormone (115 aa).

Residues 1 to 25 form the signal peptide; the sequence is MIPAKDMAKVMIVMLAICFLTKSDG. A propeptide spanning residues 26-31 is cleaved from the precursor; sequence KSVKKR. The segment at 51–69 is important for receptor binding; the sequence is RVEWLRKKLQDVHNFVALG. Residues 73–115 are disordered; the sequence is APRDAGSQRPRKKEDNVLVESHEKSLGEADKADVNVLTKAKSQ. A compositionally biased stretch (basic and acidic residues) spans 84–105; the sequence is KKEDNVLVESHEKSLGEADKAD.

This sequence belongs to the parathyroid hormone family. Interacts with PTH1R (via N-terminal extracellular domain).

It is found in the secreted. Its function is as follows. Parathyroid hormone elevates calcium level by dissolving the salts in bone and preventing their renal excretion. Acts by binding to its receptor, PTH1R, activating G protein-coupled receptor signaling. Stimulates [1-14C]-2-deoxy-D-glucose (2DG) transport and glycogen synthesis in osteoblastic cells. This chain is Parathyroid hormone, found in Homo sapiens (Human).